The chain runs to 321 residues: Carbonic anhydrase, chloroplastic (321 aa).

The transit peptide at 1 to 100 (MSTASINSCL…AAARVDQITA (100 aa)) directs the protein to the chloroplast.

This sequence belongs to the beta-class carbonic anhydrase family. In terms of assembly, homohexamer.

The protein resides in the plastid. It localises to the chloroplast stroma. It carries out the reaction hydrogencarbonate + H(+) = CO2 + H2O. Reversible hydration of carbon dioxide. The polypeptide is Carbonic anhydrase, chloroplastic (Nicotiana tabacum (Common tobacco)).